The chain runs to 146 residues: Actin-depolymerizing factor 6 (146 aa).

Serine 13 is modified (phosphoserine). Residues 14 to 146 (GMGVADESKT…DLEVLRERAN (133 aa)) form the ADF-H domain.

The protein belongs to the actin-binding proteins ADF family. Post-translationally, phosphorylated. In terms of tissue distribution, expressed in vascular tissues of all organs.

The protein localises to the cytoplasm. It localises to the cytoskeleton. In terms of biological role, actin-depolymerizing protein. Severs actin filaments (F-actin) and binds to actin monomers. In Arabidopsis thaliana (Mouse-ear cress), this protein is Actin-depolymerizing factor 6 (ADF6).